The chain runs to 118 residues: Large ribosomal subunit protein uL18 (118 aa).

Positions 1 to 22 are disordered; that stretch reads MISKPDKNKLRQKRHRRVRGKL. Basic residues predominate over residues 10-20; the sequence is LRQKRHRRVRG.

This sequence belongs to the universal ribosomal protein uL18 family. Part of the 50S ribosomal subunit; part of the 5S rRNA/L5/L18/L25 subcomplex. Contacts the 5S and 23S rRNAs.

Its function is as follows. This is one of the proteins that bind and probably mediate the attachment of the 5S RNA into the large ribosomal subunit, where it forms part of the central protuberance. This chain is Large ribosomal subunit protein uL18, found in Streptococcus thermophilus (strain ATCC BAA-491 / LMD-9).